A 260-amino-acid chain; its full sequence is Acetylglutamate kinase (260 aa).

Residues 45-46 (GG), arginine 67, and asparagine 159 contribute to the substrate site.

It belongs to the acetylglutamate kinase family. ArgB subfamily.

It is found in the cytoplasm. The catalysed reaction is N-acetyl-L-glutamate + ATP = N-acetyl-L-glutamyl 5-phosphate + ADP. It functions in the pathway amino-acid biosynthesis; L-arginine biosynthesis; N(2)-acetyl-L-ornithine from L-glutamate: step 2/4. Catalyzes the ATP-dependent phosphorylation of N-acetyl-L-glutamate. The polypeptide is Acetylglutamate kinase (Aliivibrio fischeri (strain ATCC 700601 / ES114) (Vibrio fischeri)).